The chain runs to 247 residues: 1-(5-phosphoribosyl)-5-[(5-phosphoribosylamino)methylideneamino] imidazole-4-carboxamide isomerase (247 aa).

Aspartate 8 (proton acceptor) is an active-site residue. Residue aspartate 130 is the Proton donor of the active site.

The protein belongs to the HisA/HisF family.

The protein localises to the cytoplasm. It carries out the reaction 1-(5-phospho-beta-D-ribosyl)-5-[(5-phospho-beta-D-ribosylamino)methylideneamino]imidazole-4-carboxamide = 5-[(5-phospho-1-deoxy-D-ribulos-1-ylimino)methylamino]-1-(5-phospho-beta-D-ribosyl)imidazole-4-carboxamide. The protein operates within amino-acid biosynthesis; L-histidine biosynthesis; L-histidine from 5-phospho-alpha-D-ribose 1-diphosphate: step 4/9. In Stutzerimonas stutzeri (strain A1501) (Pseudomonas stutzeri), this protein is 1-(5-phosphoribosyl)-5-[(5-phosphoribosylamino)methylideneamino] imidazole-4-carboxamide isomerase.